Consider the following 102-residue polypeptide: Small ribosomal subunit protein uS10 (102 aa).

The protein belongs to the universal ribosomal protein uS10 family. As to quaternary structure, part of the 30S ribosomal subunit.

In terms of biological role, involved in the binding of tRNA to the ribosomes. This is Small ribosomal subunit protein uS10 from Lactobacillus gasseri (strain ATCC 33323 / DSM 20243 / BCRC 14619 / CIP 102991 / JCM 1131 / KCTC 3163 / NCIMB 11718 / NCTC 13722 / AM63).